We begin with the raw amino-acid sequence, 799 residues long: RasGAP-activating-like protein 1 (799 aa).

C2 domains lie at 1–105 and 116–231; these read MAKS…DSWI and VQGE…NGWF. Ca(2+) is bound by residues Asp-21, Asp-27, Asp-74, Asp-76, Asp-82, Asp-149, Asp-155, Asp-202, Asp-204, and Asp-210. One can recognise a Ras-GAP domain in the interval 316-544; it reads GLAGPFLDYL…SRVRDFLDQL (229 aa). Thr-400 is modified (phosphothreonine). The PH domain occupies 565-672; it reads TIVREGFLLK…WLSALRKASA (108 aa). The Btk-type zinc-finger motif lies at 674–710; the sequence is NPGKLVACHPGAFRSGRWTCCLQAERSAAGCSRTHSA. Positions 682, 693, 694, and 704 each coordinate Zn(2+).

Requires Ca(2+) as cofactor.

Its function is as follows. Probable inhibitory regulator of the Ras-cyclic AMP pathway. Plays a role in dendrite formation by melanocytes. The protein is RasGAP-activating-like protein 1 of Mus musculus (Mouse).